The primary structure comprises 258 residues: Phosphonates import ATP-binding protein PhnC 1 (258 aa).

Positions 2–246 (IEFKDVGLVY…TFEEIYGRSI (245 aa)) constitute an ABC transporter domain. 35–42 (GLSGAGKS) provides a ligand contact to ATP.

Belongs to the ABC transporter superfamily. Phosphonates importer (TC 3.A.1.9.1) family. The complex is composed of two ATP-binding proteins (PhnC), two transmembrane proteins (PhnE) and a solute-binding protein (PhnD).

It is found in the cell membrane. The enzyme catalyses phosphonate(out) + ATP + H2O = phosphonate(in) + ADP + phosphate + H(+). Functionally, part of the ABC transporter complex PhnCDE involved in phosphonates import. Responsible for energy coupling to the transport system. The protein is Phosphonates import ATP-binding protein PhnC 1 of Oceanobacillus iheyensis (strain DSM 14371 / CIP 107618 / JCM 11309 / KCTC 3954 / HTE831).